The primary structure comprises 406 residues: Eukaryotic initiation factor 4A-I (406 aa).

A disordered region spans residues 1-21; that stretch reads MSASQDSRSRDNGPDGMEPEG. The residue at position 2 (Ser2) is an N-acetylserine. The residue at position 4 (Ser4) is a Phosphoserine. Positions 32-60 match the Q motif motif; sequence DSFDDMNLSESLLRGIYAYGFEKPSAIQQ. The Helicase ATP-binding domain occupies 63-234; the sequence is ILPCIKGYDV…KKFMRDPIRI (172 aa). 76 to 83 provides a ligand contact to ATP; that stretch reads AQSGTGKT. The residue at position 118 (Lys118) is an N6-acetyllysine. Residue Lys146 forms a Glycyl lysine isopeptide (Lys-Gly) (interchain with G-Cter in SUMO2) linkage. Residue Thr158 is modified to Phosphothreonine. Lys174 carries the post-translational modification N6-acetyllysine. The DEAD box motif lies at 182-185; sequence DEAD. Lys193 is subject to N6-acetyllysine. Residue Lys225 forms a Glycyl lysine isopeptide (Lys-Gly) (interchain with G-Cter in SUMO2) linkage. Lys238 is subject to N6-acetyllysine; alternate. Lys238 participates in a covalent cross-link: Glycyl lysine isopeptide (Lys-Gly) (interchain with G-Cter in SUMO2); alternate. The Helicase C-terminal domain occupies 245-406; the sequence is GIRQFYINVE…EMPLNVADLI (162 aa). Glycyl lysine isopeptide (Lys-Gly) (interchain with G-Cter in SUMO2) cross-links involve residues Lys309, Lys369, and Lys381.

It belongs to the DEAD box helicase family. eIF4A subfamily. As to quaternary structure, eIF4F is a multi-subunit complex, the composition of which varies with external and internal environmental conditions. It is composed of at least EIF4A, EIF4E and EIF4G1/EIF4G3. Interacts with PAIP1, EIF4E and UPF2. Found in a complex with XPO7, EIF4A1, ARHGAP1, VPS26A, VPS29, VPS35 and SFN. May interact with NOM1. Interacts with PDCD4; this interferes with the interaction between EIF4A and EIF4G. Interacts with RBM4. Interacts with DDX3X in an RNA-independent manner. Interacts with PKP1 (via N-terminus); the interaction promotes EIF4A1 recruitment to the cap-dependent translation complex and EIF4A1 ATPase activity.

It is found in the cytoplasm. It localises to the perinuclear region. The protein localises to the cell membrane. Its subcellular location is the stress granule. It carries out the reaction ATP + H2O = ADP + phosphate + H(+). ATP-dependent RNA helicase which is a subunit of the eIF4F complex involved in cap recognition and is required for mRNA binding to ribosome. In the current model of translation initiation, eIF4A unwinds RNA secondary structures in the 5'-UTR of mRNAs which is necessary to allow efficient binding of the small ribosomal subunit, and subsequent scanning for the initiator codon. As a result, promotes cell proliferation and growth. This Macaca fascicularis (Crab-eating macaque) protein is Eukaryotic initiation factor 4A-I (EIF4A1).